We begin with the raw amino-acid sequence, 843 residues long: Receptor-like serine/threonine-protein kinase SD1-7 (843 aa).

The signal sequence occupies residues Met-1–Ser-31. The Bulb-type lectin domain maps to Ala-32 to Asp-151. At Ala-32–Lys-435 the chain is on the extracellular side. N-linked (GlcNAc...) asparagine glycosylation is found at Asn-41, Asn-92, Asn-116, Asn-236, and Asn-251. In terms of domain architecture, EGF-like; atypical spans Pro-286–Gln-322. Intrachain disulfides connect Cys-290/Cys-302, Cys-296/Cys-310, Cys-372/Cys-397, and Cys-376/Cys-382. The PAN domain maps to Cys-341 to Ala-422. N-linked (GlcNAc...) asparagine glycosylation is present at Asn-381. A helical membrane pass occupies residues Ile-436 to Phe-456. Residues Trp-457–Arg-843 are Cytoplasmic-facing. The Protein kinase domain maps to Phe-519–Phe-809. ATP-binding positions include Leu-525–Val-533 and Lys-547. At Ser-553 the chain carries Phosphoserine. The segment at Thr-608 to Ile-625 is caM-binding. The active-site Proton acceptor is Asp-644. Phosphoserine is present on residues Ser-648 and Ser-661. Phosphothreonine is present on Thr-678. The residue at position 820 (Ser-820) is a Phosphoserine.

The protein belongs to the protein kinase superfamily. Ser/Thr protein kinase family. In terms of assembly, interacts with PUB9, PUB13, PUB14 and PUB38. In terms of processing, autophosphorylated on serine and threonine residues. In terms of tissue distribution, mostly expressed in leaves, and, to a lower extent, in stems and flower buds.

It localises to the cell membrane. The catalysed reaction is L-seryl-[protein] + ATP = O-phospho-L-seryl-[protein] + ADP + H(+). It carries out the reaction L-threonyl-[protein] + ATP = O-phospho-L-threonyl-[protein] + ADP + H(+). Involved in the regulation of cellular expansion and differentiation. Mediates subcellular relocalization of PUB9 from nucleus to plasma membrane in a protein-phosphorylation-dependent manner. May be involved in the abscisic acid-mediated signaling pathway, at least during germination. The polypeptide is Receptor-like serine/threonine-protein kinase SD1-7 (SD17) (Arabidopsis thaliana (Mouse-ear cress)).